Here is a 151-residue protein sequence, read N- to C-terminus: U1 small nuclear ribonucleoprotein C (151 aa).

Residues 4–36 form a Matrin-type zinc finger; that stretch reads FYCEYCSIYLTHSSPAGRKQHSQGRKHISAKVE.

Belongs to the U1 small nuclear ribonucleoprotein C family. As to quaternary structure, U1 snRNP is composed of the 7 core Sm proteins B/B', D1, D2, D3, E, F and G that assemble in a heptameric protein ring on the Sm site of the small nuclear RNA to form the core snRNP, and at least 3 U1 snRNP-specific proteins U1-70K, U1-A and U1-C. U1-C interacts with U1 snRNA and the 5' splice-site region of the pre-mRNA.

The protein resides in the nucleus. Its function is as follows. Component of the spliceosomal U1 snRNP, which is essential for recognition of the pre-mRNA 5' splice-site and the subsequent assembly of the spliceosome. U1-C is directly involved in initial 5' splice-site recognition for both constitutive and regulated alternative splicing. The interaction with the 5' splice-site seems to precede base-pairing between the pre-mRNA and the U1 snRNA. Stimulates commitment or early (E) complex formation by stabilizing the base pairing of the 5' end of the U1 snRNA and the 5' splice-site region. This is U1 small nuclear ribonucleoprotein C from Theileria annulata.